The chain runs to 44 residues: Thaumatin-like protein 5 (44 aa).

This sequence belongs to the thaumatin family.

This is Thaumatin-like protein 5 from Glebionis coronaria (Crown daisy).